We begin with the raw amino-acid sequence, 252 residues long: Imidazole glycerol phosphate synthase subunit HisF (252 aa).

Residues Asp-11 and Asp-130 contribute to the active site.

It belongs to the HisA/HisF family. In terms of assembly, heterodimer of HisH and HisF.

Its subcellular location is the cytoplasm. It catalyses the reaction 5-[(5-phospho-1-deoxy-D-ribulos-1-ylimino)methylamino]-1-(5-phospho-beta-D-ribosyl)imidazole-4-carboxamide + L-glutamine = D-erythro-1-(imidazol-4-yl)glycerol 3-phosphate + 5-amino-1-(5-phospho-beta-D-ribosyl)imidazole-4-carboxamide + L-glutamate + H(+). It functions in the pathway amino-acid biosynthesis; L-histidine biosynthesis; L-histidine from 5-phospho-alpha-D-ribose 1-diphosphate: step 5/9. Its function is as follows. IGPS catalyzes the conversion of PRFAR and glutamine to IGP, AICAR and glutamate. The HisF subunit catalyzes the cyclization activity that produces IGP and AICAR from PRFAR using the ammonia provided by the HisH subunit. The polypeptide is Imidazole glycerol phosphate synthase subunit HisF (Bacillus anthracis (strain CDC 684 / NRRL 3495)).